The primary structure comprises 739 residues: Phosphoribosylformylglycinamidine synthase subunit PurL (739 aa).

Residue H54 is part of the active site. ATP is bound by residues Y57 and K96. E98 lines the Mg(2+) pocket. Residues 99-102 and R121 contribute to the substrate site; that span reads SHNH. The Proton acceptor role is filled by H100. A Mg(2+)-binding site is contributed by D122. Residue Q245 coordinates substrate. D273 contributes to the Mg(2+) binding site. Substrate is bound at residue 317 to 319; it reads ESQ. Positions 500 and 537 each coordinate ATP. N538 provides a ligand contact to Mg(2+). Residue S540 participates in substrate binding.

Belongs to the FGAMS family. Monomer. Part of the FGAM synthase complex composed of 1 PurL, 1 PurQ and 2 PurS subunits.

It localises to the cytoplasm. The enzyme catalyses N(2)-formyl-N(1)-(5-phospho-beta-D-ribosyl)glycinamide + L-glutamine + ATP + H2O = 2-formamido-N(1)-(5-O-phospho-beta-D-ribosyl)acetamidine + L-glutamate + ADP + phosphate + H(+). Its pathway is purine metabolism; IMP biosynthesis via de novo pathway; 5-amino-1-(5-phospho-D-ribosyl)imidazole from N(2)-formyl-N(1)-(5-phospho-D-ribosyl)glycinamide: step 1/2. Functionally, part of the phosphoribosylformylglycinamidine synthase complex involved in the purines biosynthetic pathway. Catalyzes the ATP-dependent conversion of formylglycinamide ribonucleotide (FGAR) and glutamine to yield formylglycinamidine ribonucleotide (FGAM) and glutamate. The FGAM synthase complex is composed of three subunits. PurQ produces an ammonia molecule by converting glutamine to glutamate. PurL transfers the ammonia molecule to FGAR to form FGAM in an ATP-dependent manner. PurS interacts with PurQ and PurL and is thought to assist in the transfer of the ammonia molecule from PurQ to PurL. The sequence is that of Phosphoribosylformylglycinamidine synthase subunit PurL from Bacillus cereus (strain Q1).